Consider the following 565-residue polypeptide: Putative lipase ATG15 (565 aa).

Over 1–21 the chain is Cytoplasmic; that stretch reads MISNDYTKFSSKRRSLRYSNR. The chain crosses the membrane as a helical; Signal-anchor for type II membrane protein span at residues 22 to 42; the sequence is ILLLMGTILLIVVYFYSDILV. Residues 43-565 lie on the Lumenal side of the membrane; it reads DKSIIMFRNE…EYTTFTKRLI (523 aa). A glycan (N-linked (GlcNAc...) asparagine) is linked at Asn217. Ser347 serves as the catalytic Charge relay system. The disordered stretch occupies residues 488 to 538; it reads KKPKKQTTSSSSEKVDTSTTKSIDRTTITTRTNEKKWHPNPKDPSTTTTDD. Positions 493-518 are enriched in low complexity; that stretch reads QTTSSSSEKVDTSTTKSIDRTTITTR. Over residues 519 to 528 the composition is skewed to basic and acidic residues; sequence TNEKKWHPNP.

This sequence belongs to the AB hydrolase superfamily. Lipase family. As to quaternary structure, binds to both phosphatidylinositol (PI) and phosphatidylinositol 3,5-bisphosphate (PIP2).

The protein localises to the endosome. Its subcellular location is the multivesicular body membrane. The protein resides in the prevacuolar compartment membrane. The enzyme catalyses a triacylglycerol + H2O = a diacylglycerol + a fatty acid + H(+). Its function is as follows. Lipase which is essential for lysis of subvacuolar cytoplasm to vacuole targeted bodies and intravacuolar autophagic bodies. Involved in the lysis of intravacuolar multivesicular body (MVB) vesicles. The intravacuolar membrane disintegration by ATG15 is critical to life span extension. In Vanderwaltozyma polyspora (strain ATCC 22028 / DSM 70294 / BCRC 21397 / CBS 2163 / NBRC 10782 / NRRL Y-8283 / UCD 57-17) (Kluyveromyces polysporus), this protein is Putative lipase ATG15 (ATG15).